Reading from the N-terminus, the 99-residue chain is Nucleoid-associated protein SPN23F10240 (99 aa).

It belongs to the YbaB/EbfC family. Homodimer.

It is found in the cytoplasm. It localises to the nucleoid. Functionally, binds to DNA and alters its conformation. May be involved in regulation of gene expression, nucleoid organization and DNA protection. In Streptococcus pneumoniae (strain ATCC 700669 / Spain 23F-1), this protein is Nucleoid-associated protein SPN23F10240.